A 232-amino-acid chain; its full sequence is N-(5'-phosphoribosyl)anthranilate isomerase (232 aa).

The protein belongs to the TrpF family.

It carries out the reaction N-(5-phospho-beta-D-ribosyl)anthranilate = 1-(2-carboxyphenylamino)-1-deoxy-D-ribulose 5-phosphate. It participates in amino-acid biosynthesis; L-tryptophan biosynthesis; L-tryptophan from chorismate: step 3/5. This chain is N-(5'-phosphoribosyl)anthranilate isomerase (TRP1), found in Wickerhamomyces anomalus (Yeast).